Consider the following 173-residue polypeptide: Crossover junction endodeoxyribonuclease RuvC (173 aa).

Residues Asp-8, Glu-69, and Asp-141 contribute to the active site. Residues Asp-8, Glu-69, and Asp-141 each contribute to the Mg(2+) site.

The protein belongs to the RuvC family. In terms of assembly, homodimer which binds Holliday junction (HJ) DNA. The HJ becomes 2-fold symmetrical on binding to RuvC with unstacked arms; it has a different conformation from HJ DNA in complex with RuvA. In the full resolvosome a probable DNA-RuvA(4)-RuvB(12)-RuvC(2) complex forms which resolves the HJ. It depends on Mg(2+) as a cofactor.

Its subcellular location is the cytoplasm. It carries out the reaction Endonucleolytic cleavage at a junction such as a reciprocal single-stranded crossover between two homologous DNA duplexes (Holliday junction).. The RuvA-RuvB-RuvC complex processes Holliday junction (HJ) DNA during genetic recombination and DNA repair. Endonuclease that resolves HJ intermediates. Cleaves cruciform DNA by making single-stranded nicks across the HJ at symmetrical positions within the homologous arms, yielding a 5'-phosphate and a 3'-hydroxyl group; requires a central core of homology in the junction. The consensus cleavage sequence is 5'-(A/T)TT(C/G)-3'. Cleavage occurs on the 3'-side of the TT dinucleotide at the point of strand exchange. HJ branch migration catalyzed by RuvA-RuvB allows RuvC to scan DNA until it finds its consensus sequence, where it cleaves and resolves the cruciform DNA. This is Crossover junction endodeoxyribonuclease RuvC from Xylella fastidiosa (strain 9a5c).